Here is a 181-residue protein sequence, read N- to C-terminus: Coatomer subunit zeta-3 (181 aa).

It belongs to the adaptor complexes small subunit family. Oligomeric complex that consists of at least the alpha, beta, beta', gamma, delta, epsilon and zeta subunits.

The protein resides in the cytoplasm. It is found in the golgi apparatus membrane. The protein localises to the cytoplasmic vesicle. It localises to the COPI-coated vesicle membrane. In terms of biological role, the coatomer is a cytosolic protein complex that binds to dilysine motifs and reversibly associates with Golgi non-clathrin-coated vesicles, which further mediate biosynthetic protein transport from the ER, via the Golgi up to the trans Golgi network. Coatomer complex is required for budding from Golgi membranes, and is essential for the retrograde Golgi-to-ER transport of dilysine-tagged proteins. The zeta subunit may be involved in regulating the coat assembly and, hence, the rate of biosynthetic protein transport due to its association-dissociation properties with the coatomer complex. The chain is Coatomer subunit zeta-3 from Arabidopsis thaliana (Mouse-ear cress).